Consider the following 171-residue polypeptide: uncharacterized protein (171 aa).

Functionally, required for production of the bacteriocin SkfA. This is an uncharacterized protein from Bacillus subtilis (strain 168).